The following is a 139-amino-acid chain: Large ribosomal subunit protein uL16 (139 aa).

Basic residues predominate over residues 1-17 (MLMPKRVKYRKSQRGRM). The interval 1-24 (MLMPKRVKYRKSQRGRMKGNSGRG) is disordered.

Belongs to the universal ribosomal protein uL16 family. Part of the 50S ribosomal subunit.

Binds 23S rRNA and is also seen to make contacts with the A and possibly P site tRNAs. This Chlorobium limicola (strain DSM 245 / NBRC 103803 / 6330) protein is Large ribosomal subunit protein uL16.